Reading from the N-terminus, the 376-residue chain is Probable inactive protein kinase At3g63330 (376 aa).

A Protein kinase domain is found at 1 to 370 (MVERGPTVYL…VDEALQHPYF (370 aa)).

Belongs to the protein kinase superfamily. Ser/Thr protein kinase family.

The sequence is that of Probable inactive protein kinase At3g63330 from Arabidopsis thaliana (Mouse-ear cress).